The primary structure comprises 89 residues: Otospiralin (89 aa).

The first 21 residues, Met1–Ala21, serve as a signal peptide directing secretion.

It belongs to the otospiralin family. Ear specific.

The protein resides in the secreted. In terms of biological role, may be essential for the survival of the neurosensory epithelium of the inner ear. The protein is Otospiralin (OTOS) of Homo sapiens (Human).